The following is a 207-amino-acid chain: N-(5'-phosphoribosyl)anthranilate isomerase (207 aa).

Belongs to the TrpF family.

It catalyses the reaction N-(5-phospho-beta-D-ribosyl)anthranilate = 1-(2-carboxyphenylamino)-1-deoxy-D-ribulose 5-phosphate. It participates in amino-acid biosynthesis; L-tryptophan biosynthesis; L-tryptophan from chorismate: step 3/5. This Stutzerimonas stutzeri (strain A1501) (Pseudomonas stutzeri) protein is N-(5'-phosphoribosyl)anthranilate isomerase.